Reading from the N-terminus, the 122-residue chain is Small ribosomal subunit protein uS13 (122 aa).

Positions 93 to 122 (RRSLPVRGQRTHTNARTRKGPAKPIAGKKK) are disordered.

The protein belongs to the universal ribosomal protein uS13 family. In terms of assembly, part of the 30S ribosomal subunit. Forms a loose heterodimer with protein S19. Forms two bridges to the 50S subunit in the 70S ribosome.

Located at the top of the head of the 30S subunit, it contacts several helices of the 16S rRNA. In the 70S ribosome it contacts the 23S rRNA (bridge B1a) and protein L5 of the 50S subunit (bridge B1b), connecting the 2 subunits; these bridges are implicated in subunit movement. Contacts the tRNAs in the A and P-sites. This is Small ribosomal subunit protein uS13 from Chelativorans sp. (strain BNC1).